A 202-amino-acid polypeptide reads, in one-letter code: LexA repressor (202 aa).

A DNA-binding region (H-T-H motif) is located at residues 28 to 48 (RAEIAQRLGFRSPNAAEEHLK). Active-site for autocatalytic cleavage activity residues include serine 119 and lysine 156.

It belongs to the peptidase S24 family. Homodimer.

The enzyme catalyses Hydrolysis of Ala-|-Gly bond in repressor LexA.. Its function is as follows. Represses a number of genes involved in the response to DNA damage (SOS response), including recA and lexA. Binds to the 16 bp palindromic sequence 5'-CTGTATATATATACAG-3'. In the presence of single-stranded DNA, RecA interacts with LexA causing an autocatalytic cleavage which disrupts the DNA-binding part of LexA, leading to derepression of the SOS regulon and eventually DNA repair. This is LexA repressor from Escherichia fergusonii (strain ATCC 35469 / DSM 13698 / CCUG 18766 / IAM 14443 / JCM 21226 / LMG 7866 / NBRC 102419 / NCTC 12128 / CDC 0568-73).